A 494-amino-acid chain; its full sequence is Catalase isozyme 2 (494 aa).

Residues 1-29 (MDPCKFRPSSSFDTKTTTTNAGQPVWNDN) are disordered. The segment covering 8-22 (PSSSFDTKTTTTNAG) has biased composition (polar residues). Active-site residues include H65 and N138. Position 348 (Y348) interacts with heme.

This sequence belongs to the catalase family. Homotetramer. It depends on heme as a cofactor.

It localises to the peroxisome. It is found in the glyoxysome. The enzyme catalyses 2 H2O2 = O2 + 2 H2O. Occurs in almost all aerobically respiring organisms and serves to protect cells from the toxic effects of hydrogen peroxide. This is Catalase isozyme 2 (CAT2) from Hordeum vulgare (Barley).